Reading from the N-terminus, the 456-residue chain is Bifunctional protein GlmU (456 aa).

The pyrophosphorylase stretch occupies residues 1 to 229; sequence MTKKALSAVI…VMEVEGANNR (229 aa). Residues 11 to 14, lysine 25, glutamine 76, 81 to 82, 103 to 105, glycine 140, glutamate 154, asparagine 169, and asparagine 227 each bind UDP-N-acetyl-alpha-D-glucosamine; these read LAAG, GT, and YGD. Residue aspartate 105 participates in Mg(2+) binding. Asparagine 227 is a binding site for Mg(2+). The linker stretch occupies residues 230 to 250; sequence LQLAALERYFQNKQASKLLLE. The N-acetyltransferase stretch occupies residues 251–456; sequence GVMIYDPARF…QGWQRPIKKK (206 aa). The UDP-N-acetyl-alpha-D-glucosamine site is built by arginine 333 and lysine 351. Residue histidine 363 is the Proton acceptor of the active site. Tyrosine 366 and asparagine 377 together coordinate UDP-N-acetyl-alpha-D-glucosamine. Acetyl-CoA is bound by residues alanine 380, 386–387, serine 405, alanine 423, and arginine 440; that span reads NY.

It in the N-terminal section; belongs to the N-acetylglucosamine-1-phosphate uridyltransferase family. This sequence in the C-terminal section; belongs to the transferase hexapeptide repeat family. Homotrimer. It depends on Mg(2+) as a cofactor.

It localises to the cytoplasm. It catalyses the reaction alpha-D-glucosamine 1-phosphate + acetyl-CoA = N-acetyl-alpha-D-glucosamine 1-phosphate + CoA + H(+). The enzyme catalyses N-acetyl-alpha-D-glucosamine 1-phosphate + UTP + H(+) = UDP-N-acetyl-alpha-D-glucosamine + diphosphate. Its pathway is nucleotide-sugar biosynthesis; UDP-N-acetyl-alpha-D-glucosamine biosynthesis; N-acetyl-alpha-D-glucosamine 1-phosphate from alpha-D-glucosamine 6-phosphate (route II): step 2/2. It participates in nucleotide-sugar biosynthesis; UDP-N-acetyl-alpha-D-glucosamine biosynthesis; UDP-N-acetyl-alpha-D-glucosamine from N-acetyl-alpha-D-glucosamine 1-phosphate: step 1/1. It functions in the pathway bacterial outer membrane biogenesis; LPS lipid A biosynthesis. Functionally, catalyzes the last two sequential reactions in the de novo biosynthetic pathway for UDP-N-acetylglucosamine (UDP-GlcNAc). The C-terminal domain catalyzes the transfer of acetyl group from acetyl coenzyme A to glucosamine-1-phosphate (GlcN-1-P) to produce N-acetylglucosamine-1-phosphate (GlcNAc-1-P), which is converted into UDP-GlcNAc by the transfer of uridine 5-monophosphate (from uridine 5-triphosphate), a reaction catalyzed by the N-terminal domain. The polypeptide is Bifunctional protein GlmU (Haemophilus influenzae (strain 86-028NP)).